The sequence spans 181 residues: Adenine phosphoribosyltransferase (181 aa).

It belongs to the purine/pyrimidine phosphoribosyltransferase family. Homodimer.

Its subcellular location is the cytoplasm. It catalyses the reaction AMP + diphosphate = 5-phospho-alpha-D-ribose 1-diphosphate + adenine. It functions in the pathway purine metabolism; AMP biosynthesis via salvage pathway; AMP from adenine: step 1/1. Catalyzes a salvage reaction resulting in the formation of AMP, that is energically less costly than de novo synthesis. This is Adenine phosphoribosyltransferase from Shewanella loihica (strain ATCC BAA-1088 / PV-4).